The sequence spans 186 residues: MSDNKTELNEEQHNATAEGEVSEETHQAEDAVEHDLEAMLEEARKEAESQKELALRTLADMENLKRRTRMDVESAHKFALEKFVNELLPVLDSMEMGLDASSKEDVTIDSIREGLDMTFKQFLDVMQKFNVERVNPTGEKFDPQLHEAMTMIPSPDHDSQMVIEVFQKGYVLNDRLVRPARVVVAE.

Composition is skewed to basic and acidic residues over residues 1–13 (MSDN…EEQH) and 23–34 (EETHQAEDAVEH). The disordered stretch occupies residues 1–34 (MSDNKTELNEEQHNATAEGEVSEETHQAEDAVEH).

The protein belongs to the GrpE family. Homodimer.

It is found in the cytoplasm. Its function is as follows. Participates actively in the response to hyperosmotic and heat shock by preventing the aggregation of stress-denatured proteins, in association with DnaK and GrpE. It is the nucleotide exchange factor for DnaK and may function as a thermosensor. Unfolded proteins bind initially to DnaJ; upon interaction with the DnaJ-bound protein, DnaK hydrolyzes its bound ATP, resulting in the formation of a stable complex. GrpE releases ADP from DnaK; ATP binding to DnaK triggers the release of the substrate protein, thus completing the reaction cycle. Several rounds of ATP-dependent interactions between DnaJ, DnaK and GrpE are required for fully efficient folding. In Hydrogenovibrio crunogenus (strain DSM 25203 / XCL-2) (Thiomicrospira crunogena), this protein is Protein GrpE.